The chain runs to 2726 residues: Filamin-C (2726 aa).

Residues 1 to 260 form an actin-binding region; sequence MMNNSNYSDA…VMTYLSQFPK (260 aa). Serine 5 is subject to Phosphoserine. Calponin-homology (CH) domains lie at 37–143 and 160–263; these read KIQQ…LHYS and QTPK…KAKL. 15 Filamin repeats span residues 271 to 369, 371 to 469, 470 to 566, 567 to 659, 663 to 759, 760 to 862, 863 to 961, 962 to 1057, 1058 to 1150, 1151 to 1245, 1246 to 1345, 1346 to 1438, 1439 to 1534, 1535 to 1631, and 1636 to 1735; these read SKQL…EVNV, MALG…PVHV, AEAC…EVQV, SPEA…IAHI, PPDC…RVNV, GEGS…HIKV, DPSH…VVNV, APPL…AVEG, VLPP…KATI, QPVF…RVHV, QPAV…RVGV, TEGC…RVPV, KDVV…KIKV, LPSH…RIHA, and DASK…HVLA. Arginine 1003 bears the Omega-N-methylarginine mark. 2 positions are modified to phosphoserine: serine 1162 and serine 1339. The segment at 1736-1759 is hinge 1; it reads CDPLPHVEEPAEMLQMRQPYAPLR. Filamin repeat units lie at residues 1760-1855, 1856-1947, 1948-2034, and 2037-2129; these read PGTC…QFYV, DAIN…TAKI, TGDD…KILV, and SEIG…TVKV. Serine 2043 bears the Phosphoserine mark. The intradomain insert; mediate targeting to Z lines stretch occupies residues 2163 to 2244; it reads GNWFQMVSAQ…FGSITRQQEG (82 aa). A compositionally biased stretch (basic and acidic residues) spans 2193 to 2210; sequence EISKTRGGETKREVRVEE. The tract at residues 2193-2214 is disordered; sequence EISKTRGGETKREVRVEESTQV. The stretch at 2212–2307 is one Filamin 20; mediates interaction with XIRP1 repeat; sequence TQVGGDPFPA…VPGSPFQFTV (96 aa). Residues serine 2234 and serine 2237 each carry the phosphoserine modification. Position 2239 is a phosphothreonine (threonine 2239). A compositionally biased stretch (polar residues) spans 2241–2260; it reads QQEGEASSQDMTAQVTSPSG. Residues 2241–2261 form a disordered region; the sequence is QQEGEASSQDMTAQVTSPSGK. Filamin repeat units follow at residues 2310 to 2402, 2404 to 2497, and 2501 to 2593; these read LGEG…VVPV, SLSD…KIRV, and SQAG…KAKV. The interval 2404 to 2725 is interaction with INPPL1; sequence SLSDDARRLT…VPGSPFKVNV (322 aa). Residues serine 2587, serine 2618, serine 2621, serine 2633, serine 2715, and serine 2719 each carry the phosphoserine modification. Residues 2594–2630 form a hinge 2 region; it reads TGPRLSGGHSLHETSTVLVETVTKSSSSRGASYSSIP. The self-association site, tail stretch occupies residues 2594–2726; that stretch reads TGPRLSGGHS…PGSPFKVNVP (133 aa). A Filamin 24 repeat occupies 2631–2725; that stretch reads KFSSDASKVV…VPGSPFKVNV (95 aa).

This sequence belongs to the filamin family. As to quaternary structure, homodimer; the filamin repeat 24 and the second hinge domain are important for dimer formation. Interacts with FLNB, INPPL1, ITGB1A, KCND2, MYOT, MYOZ1 and MYOZ3. Interacts with sarcoglycans SGCD and SGCG. Interacts (via filament repeats 17-18, 20-21 and 24) with USP25 (isoform USP25m only). Interacts with FBLIM1. Interacts with XIRP1; this interaction is mediated by filamin 20 repeat. Interacts with KY. Interacts with IGFN1. Interacts with MICALL2. Interacts with ANK3. Interacts with MICALL2. Interacts with ANK3. Interacts with SYNPO2. Ubiquitinated by FBXL22, leading to proteasomal degradation.

It localises to the cytoplasm. It is found in the membrane. The protein resides in the cytoskeleton. The protein localises to the myofibril. Its subcellular location is the sarcomere. It localises to the z line. Functionally, muscle-specific filamin, which plays a central role in sarcomere assembly and organization. Critical for normal myogenesis, it probably functions as a large actin-cross-linking protein with structural functions at the Z lines in muscle cells. May be involved in reorganizing the actin cytoskeleton in response to signaling events. The chain is Filamin-C (Flnc) from Mus musculus (Mouse).